The primary structure comprises 301 residues: MTTKYDVKTFQGFILTLQDYWAQQGCAIVQPLDMEVGAGTFHPQTFLRALGPEPMSSAYVQPSRRPTDGRYGENPNRLQHYYQFQVVLKPSPDNIQELYLGSLRALGIDTQIHDIRFVEDNWESPTLGAWGLGWEVWLNGMEVTQFTYFQQVGGIECSPVTGEITYGLERLAMYIQGVDSVYDLVWTDGPMGRITYGDVFHQNEVEQSTYNFEHADVDFLFGMFDQCEKACQHLLSLETPLPLPAYEQVMKASHAFNLLDARHAISVTERQRYILRVRTMAKAVAEAYYKAREALGFPMCK.

It belongs to the class-II aminoacyl-tRNA synthetase family. As to quaternary structure, tetramer of two alpha and two beta subunits.

The protein localises to the cytoplasm. The catalysed reaction is tRNA(Gly) + glycine + ATP = glycyl-tRNA(Gly) + AMP + diphosphate. The sequence is that of Glycine--tRNA ligase alpha subunit from Shewanella amazonensis (strain ATCC BAA-1098 / SB2B).